The chain runs to 277 residues: MKISTFNAKTKKKKFVNAEEINAFKVAYGKPLNRKDYLRYAIIPGLVTGVFSFLLLYIWWLSLIFGLMGSVYGLKVLMPKVIKRAYERDSFRERNKFVNNMTSLLANDSQTLLTSLQRASDRSQGELRADLKILLASVMGADQEQVLQAFKQMSNKYRDDITFDQYLEQLETCVLEGRTNLETLKDIKTHHNEMKEKKDDYERKKEGHLKDMKMLCGVIVVFVLAITFSFGFKTYITAFARHPIGWITSGIYMTLMCFFFKSFTTYLFDDSIMEVKA.

The next 4 membrane-spanning stretches (helical) occupy residues 37–59 (YLRY…LYIW), 63–82 (LIFG…PKVI), 214–236 (MLCG…KTYI), and 246–268 (WITS…TYLF).

The protein localises to the cell membrane. This is an uncharacterized protein from Bacillus anthracis.